An 82-amino-acid chain; its full sequence is MLPFVHEQIGTIIVNFFILTVVCAITLVVCLAILTAIRLCVQCASGVNTLLFVPAFYIYNTGRNAYFKFQENRPPFPPEDWV.

At 1 to 16 the chain is on the virion surface side; the sequence is MLPFVHEQIGTIIVNF. The helical transmembrane segment at 17-37 threads the bilayer; it reads FILTVVCAITLVVCLAILTAI. The Intravirion segment spans residues 38 to 78; it reads RLCVQCASGVNTLLFVPAFYIYNTGRNAYFKFQENRPPFPP.

This sequence belongs to the betacoronaviruses E protein family. Homopentamer. Interacts with membrane protein M in the budding compartment of the host cell, which is located between endoplasmic reticulum and the Golgi complex. Interacts with Nucleoprotein.

It localises to the host Golgi apparatus membrane. Functionally, plays a central role in virus morphogenesis and assembly. Acts as a viroporin and self-assembles in host membranes forming pentameric protein-lipid pores that allow ion transport. Also plays a role in the induction of apoptosis. This is Envelope small membrane protein from Tylonycteris pachypus (Lesser bamboo bat).